The chain runs to 352 residues: Uroporphyrinogen decarboxylase (352 aa).

Substrate-binding positions include Arg-26–Arg-30, Asp-76, Tyr-153, Ser-208, and His-323.

This sequence belongs to the uroporphyrinogen decarboxylase family. In terms of assembly, homodimer.

The protein localises to the cytoplasm. It carries out the reaction uroporphyrinogen III + 4 H(+) = coproporphyrinogen III + 4 CO2. It participates in porphyrin-containing compound metabolism; protoporphyrin-IX biosynthesis; coproporphyrinogen-III from 5-aminolevulinate: step 4/4. In terms of biological role, catalyzes the decarboxylation of four acetate groups of uroporphyrinogen-III to yield coproporphyrinogen-III. In Synechococcus sp. (strain CC9902), this protein is Uroporphyrinogen decarboxylase.